Here is a 249-residue protein sequence, read N- to C-terminus: Hydroxyacylglutathione hydrolase (249 aa).

Zn(2+) contacts are provided by His53, His55, Asp57, His58, His110, Asp127, and His165.

Belongs to the metallo-beta-lactamase superfamily. Glyoxalase II family. In terms of assembly, monomer. Requires Zn(2+) as cofactor.

It catalyses the reaction an S-(2-hydroxyacyl)glutathione + H2O = a 2-hydroxy carboxylate + glutathione + H(+). Its pathway is secondary metabolite metabolism; methylglyoxal degradation; (R)-lactate from methylglyoxal: step 2/2. Functionally, thiolesterase that catalyzes the hydrolysis of S-D-lactoyl-glutathione to form glutathione and D-lactic acid. The polypeptide is Hydroxyacylglutathione hydrolase (Hamiltonella defensa subsp. Acyrthosiphon pisum (strain 5AT)).